A 363-amino-acid chain; its full sequence is 3-dehydroquinate synthase (363 aa).

NAD(+)-binding positions include 72–77 (SGEKEK), 130–131 (TT), Lys142, and Lys151. Residues Glu184, His247, and His264 each contribute to the Zn(2+) site.

The protein belongs to the sugar phosphate cyclases superfamily. Dehydroquinate synthase family. The cofactor is Co(2+). Zn(2+) serves as cofactor. It depends on NAD(+) as a cofactor.

The protein localises to the cytoplasm. It carries out the reaction 7-phospho-2-dehydro-3-deoxy-D-arabino-heptonate = 3-dehydroquinate + phosphate. The protein operates within metabolic intermediate biosynthesis; chorismate biosynthesis; chorismate from D-erythrose 4-phosphate and phosphoenolpyruvate: step 2/7. Catalyzes the conversion of 3-deoxy-D-arabino-heptulosonate 7-phosphate (DAHP) to dehydroquinate (DHQ). In Bacillus thuringiensis (strain Al Hakam), this protein is 3-dehydroquinate synthase.